A 199-amino-acid chain; its full sequence is MAKVLVLYYSSWGHVEQMAKAVAEGARETGAEVALKRVPELVPDEVAKQFHYKLDQEAPIATVEELADYDAIIFGTPTRYGNMASQMKQFIDQTGGLWAKGALVGKVGSAFTSTASQHGGQETTLTSFHTVLFHHGMVVVGLPYSFAGQNGVEQVKGNSPYGATTIADGDGSRQPSEVELDGARFQGRHVAGIAAKLAG.

Positions 4–190 (VLVLYYSSWG…DGARFQGRHV (187 aa)) constitute a Flavodoxin-like domain. Residues 10–15 (SSWGHV) and 78–80 (TRY) contribute to the FMN site. Position 12 (Trp-12) interacts with NAD(+). Trp-98 lines the substrate pocket. FMN contacts are provided by residues 113–119 (STASQHG) and His-134.

The protein belongs to the WrbA family. The cofactor is FMN.

The enzyme catalyses a quinone + NADH + H(+) = a quinol + NAD(+). The catalysed reaction is a quinone + NADPH + H(+) = a quinol + NADP(+). The polypeptide is NAD(P)H dehydrogenase (quinone) (Methylorubrum extorquens (strain CM4 / NCIMB 13688) (Methylobacterium extorquens)).